Consider the following 549-residue polypeptide: Membrane protein insertase YidC (549 aa).

A helical transmembrane segment spans residues 6–26; that stretch reads NLLLIGLLLVSFMLWQSWMVD. Residues 35–55 are disordered; it reads ATAESSVPASSGGDVPNQNDA. Helical transmembrane passes span 349-369, 424-444, 462-482, and 503-523; these read QFLH…TMIV, LGGC…YWTL, LSVK…MWYI, and PIVF…YWVV.

It belongs to the OXA1/ALB3/YidC family. Type 1 subfamily. In terms of assembly, interacts with the Sec translocase complex via SecD. Specifically interacts with transmembrane segments of nascent integral membrane proteins during membrane integration.

The protein localises to the cell inner membrane. Required for the insertion and/or proper folding and/or complex formation of integral membrane proteins into the membrane. Involved in integration of membrane proteins that insert both dependently and independently of the Sec translocase complex, as well as at least some lipoproteins. Aids folding of multispanning membrane proteins. This Tolumonas auensis (strain DSM 9187 / NBRC 110442 / TA 4) protein is Membrane protein insertase YidC.